The sequence spans 368 residues: uncharacterized protein (368 aa).

Belongs to the CdaR family.

This is an uncharacterized protein from Haemophilus influenzae (strain ATCC 51907 / DSM 11121 / KW20 / Rd).